The following is a 182-amino-acid chain: Putative manganese efflux pump MntP (182 aa).

The next 5 helical transmembrane spans lie at 3 to 23, 42 to 62, 65 to 85, 126 to 146, and 161 to 181; these read ILLLAVALSMDCVALSMSNGA, FFQGAMPIIGFFLGALFVGFI, IDHFVAFAILGFLGVKMIFDS, IWFSCAIIAFVCFILSFAATF, and ILGGLILIFIGFKILITHLGI.

Belongs to the MntP (TC 9.B.29) family.

The protein localises to the cell inner membrane. Its function is as follows. Probably functions as a manganese efflux pump. This Campylobacter hominis (strain ATCC BAA-381 / DSM 21671 / CCUG 45161 / LMG 19568 / NCTC 13146 / CH001A) protein is Putative manganese efflux pump MntP.